A 303-amino-acid polypeptide reads, in one-letter code: N-acetyl-D-glucosamine kinase (303 aa).

Residues 4 to 11 (GFDIGGTK) and 133 to 140 (GVGGGLIF) contribute to the ATP site. His-157, Cys-177, Cys-179, and Cys-184 together coordinate Zn(2+).

This sequence belongs to the ROK (NagC/XylR) family. NagK subfamily.

It catalyses the reaction N-acetyl-D-glucosamine + ATP = N-acetyl-D-glucosamine 6-phosphate + ADP + H(+). The protein operates within cell wall biogenesis; peptidoglycan recycling. Functionally, catalyzes the phosphorylation of N-acetyl-D-glucosamine (GlcNAc) derived from cell-wall degradation, yielding GlcNAc-6-P. The chain is N-acetyl-D-glucosamine kinase from Shigella sonnei (strain Ss046).